Consider the following 265-residue polypeptide: Putative N(omega)-hydroxy-L-arginine synthase DcsA (265 aa).

It belongs to the DcsA family. Heme serves as cofactor.

Involved in the biosynthesis of the antibiotic D-cycloserine (DCS), a cyclic structural analog of D-alanine, used as an antitubercular agent. Could catalyze the production of N(omega)-hydroxy-L-arginine (NHA) from L-arginine. This is Putative N(omega)-hydroxy-L-arginine synthase DcsA from Streptomyces lavendulae.